We begin with the raw amino-acid sequence, 503 residues long: Lysine--tRNA ligase (503 aa).

The Mg(2+) site is built by glutamate 413 and glutamate 420.

The protein belongs to the class-II aminoacyl-tRNA synthetase family. As to quaternary structure, homodimer. Requires Mg(2+) as cofactor.

It is found in the cytoplasm. The enzyme catalyses tRNA(Lys) + L-lysine + ATP = L-lysyl-tRNA(Lys) + AMP + diphosphate. The chain is Lysine--tRNA ligase from Actinobacillus succinogenes (strain ATCC 55618 / DSM 22257 / CCUG 43843 / 130Z).